We begin with the raw amino-acid sequence, 856 residues long: Serine/threonine-protein kinase unc-51 (856 aa).

The Protein kinase domain occupies Tyr9 to Leu275. ATP is bound by residues Leu15–Val23 and Lys39. Asp134 serves as the catalytic Proton acceptor. Residues Pro304–Arg327 form a disordered region. The short motif at Phe358 to Leu361 is the LIR element. Disordered regions lie at residues Pro362–Val391, Leu405–Thr471, and Pro520–Pro582. Residues Gln365 to Thr385 show a composition bias toward polar residues. Positions Thr411–Gln436 are enriched in low complexity. Polar residues-rich tracts occupy residues Ile527–Ile536 and Lys566–Ala578. Residues Tyr750–Thr856 are required for interaction with unc-14 and vab-8.

Belongs to the protein kinase superfamily. Ser/Thr protein kinase family. APG1/unc-51/ULK1 subfamily. As to quaternary structure, interacts with unc-14 and vab-8. Interacts (via C-terminus) with atg-13. Interacts (via the LIR motif) with lgg-1; the interaction is direct. It depends on Mg(2+) as a cofactor.

It carries out the reaction L-seryl-[protein] + ATP = O-phospho-L-seryl-[protein] + ADP + H(+). The enzyme catalyses L-threonyl-[protein] + ATP = O-phospho-L-threonyl-[protein] + ADP + H(+). Functionally, protein kinase important for axonal elongation and axonal guidance. Functions in the CAN axons to direct both anterior and posterior migrations. Phosphorylates both unc-14 and vab-8. Component of the unc-51/atg-13 complex that is probably recruited by lgg-1 to preautophagosomes and is required for autophagosome formation. Interaction with autophagy related proteins such as atg-13 links it to the autophagy machinery to in turn promote P-granule degradation in somatic cells. Plays a role in mitophagy during limited food availability. Regulates cell size. Plays a role in male tail ray pattern formation. May be required for normal dauer morphogenesis. In Caenorhabditis elegans, this protein is Serine/threonine-protein kinase unc-51.